The sequence spans 367 residues: Innexin inx2 (367 aa).

Residues 1-22 lie on the Cytoplasmic side of the membrane; it reads MFDVFGSVKGLLKIDQVCIDNN. A helical membrane pass occupies residues 23–43; it reads VFRMHYKATVIILIAFSLLVT. Topologically, residues 44 to 109 are extracellular; it reads SRQYIGDPID…EDEVKYHKYY (66 aa). The helical transmembrane segment at 110 to 130 threads the bilayer; that stretch reads QWVCFVLFFQAILFYVPRYLW. Residues 130–179 form an interaction with shg region; that stretch reads WKSWEGGRLKMLVMDLNSPIVNDECKNDRKKILVDYFIGNLNRHNFYAFR. The Cytoplasmic portion of the chain corresponds to 131–179; the sequence is KSWEGGRLKMLVMDLNSPIVNDECKNDRKKILVDYFIGNLNRHNFYAFR. The chain crosses the membrane as a helical span at residues 180 to 200; it reads FFVCEALNFVNVIGQIYFVDF. Over 201 to 266 the chain is Extracellular; that stretch reads FLDGEFSTYG…VLPLNIVNEK (66 aa). A helical transmembrane segment spans residues 267–287; that stretch reads IYVFLWFWFIILSIMSGISLI. The Cytoplasmic portion of the chain corresponds to 288–367; it reads YRIAVVAGPK…HSAHKRPFDA (80 aa).

The protein belongs to the pannexin family. In terms of assembly, monomer and heterooligomer with ogre or Inx3 (via cytoplasmic C-terminal region). Interacts (via cytoplasmic loop) with shg (via cytoplasmic region). Interacts with arm. In ovary, expressed in inner germarial sheath cells, prefollicular cells, follicle cells, nurse cells and oocytes. Expressed in embryonic epithelial cells. Expressed in foregut and hindgut from stage 11-17, segmentally repeated tracheal placodes at stage 14, salivary gland at stage 16 and proventriculus at stage 16-17 (at protein level). During germband extension stage (stage 7), expressed in epidermal epithelial cells. Expressed in cephalic furrow. Repeating epidermal pattern emerges at stage 11, refines to one or two cells at each side of the segment borders by stage 13. Expressed in the imaginal wing disk. In pupae, expressed in the CNS and in primary, secondary and tertiary pigment cells of the retina. Expressed in optic lamina of the adult CNS.

The protein localises to the cell membrane. It localises to the cell junction. Its subcellular location is the gap junction. The protein resides in the cytoplasm. It is found in the apical cell membrane. The protein localises to the apicolateral cell membrane. It localises to the basolateral cell membrane. Its subcellular location is the lateral cell membrane. Structural components of the gap junctions. Involved in gap junctional communication between germline and somatic cells which is essential for normal oogenesis. In embryonic epidermis, required for epithelial morphogenesis. Required for keyhole formation during early stages of proventriculus development in response to wg signaling. In follicle cells, promotes the formation of egg chambers in part through regulation of shg and baz at the boundary between germ cells and follicle cells. In inner germarial sheath cells, required for survival of early germ cells and for cyst formation. This Drosophila melanogaster (Fruit fly) protein is Innexin inx2 (Inx2).